Reading from the N-terminus, the 94-residue chain is Small ribosomal subunit protein uS19 (94 aa).

Belongs to the universal ribosomal protein uS19 family.

Functionally, protein S19 forms a complex with S13 that binds strongly to the 16S ribosomal RNA. In Finegoldia magna (strain ATCC 29328 / DSM 20472 / WAL 2508) (Peptostreptococcus magnus), this protein is Small ribosomal subunit protein uS19.